A 700-amino-acid chain; its full sequence is Auxin response factor 18 (700 aa).

A DNA-binding region (TF-B3) is located at residues 128–230 (FAKTLTQSDA…DLCVGIRRAK (103 aa)). 2 disordered regions span residues 234-254 (VGGP…AAGG) and 560-595 (VKKS…DNLS). Pro residues predominate over residues 239–250 (FLPPPPPPPPTP). A compositionally biased stretch (polar residues) spans 565–594 (SDGNAENTVNKSNSDVSSPRSNQNGTTDNL). In terms of domain architecture, PB1 spans 614–697 (TGHCKVFMQS…NILTDTSGDN (84 aa)).

It belongs to the ARF family. As to quaternary structure, homodimers and heterodimers. In terms of tissue distribution, expressed in roots, culms, leaves and young panicles.

It is found in the nucleus. In terms of biological role, auxin response factors (ARFs) are transcriptional factors that bind specifically to the DNA sequence 5'-TGTCTC-3' found in the auxin-responsive promoter elements (AuxREs). The chain is Auxin response factor 18 (ARF18) from Oryza sativa subsp. japonica (Rice).